Here is an 80-residue protein sequence, read N- to C-terminus: Tripartite terminase subunit 2 (80 aa).

This sequence belongs to the herpesviridae TRM2 protein family. As to quaternary structure, associates with TRM1 and TRM3 to form the tripartite terminase complex.

It localises to the host nucleus. Its function is as follows. Component of the molecular motor that translocates viral genomic DNA in empty capsid during DNA packaging. Forms a tripartite terminase complex together with TRM1 and TRM3 in the host cytoplasm. Once the complex reaches the host nucleus, it interacts with the capsid portal vertex. This portal forms a ring in which genomic DNA is translocated into the capsid. The sequence is that of Tripartite terminase subunit 2 from Homo sapiens (Human).